Reading from the N-terminus, the 257-residue chain is Flagellar brake protein YcgR 2 (257 aa).

Positions 131 to 244 (QRREFFRVQT…AERTLQRVVT (114 aa)) constitute a PilZ domain.

It belongs to the YcgR family. As to quaternary structure, monomer. Interacts with the flagellar basal bodies.

Its subcellular location is the bacterial flagellum basal body. Acts as a flagellar brake, regulating swimming and swarming in a bis-(3'-5') cyclic diguanylic acid (c-di-GMP)-dependent manner. Binds 1 c-di-GMP dimer per subunit. Increasing levels of c-di-GMP lead to decreased motility. The sequence is that of Flagellar brake protein YcgR 2 from Paraburkholderia phytofirmans (strain DSM 17436 / LMG 22146 / PsJN) (Burkholderia phytofirmans).